Here is a 326-residue protein sequence, read N- to C-terminus: UDP-N-acetylglucosamine transporter (326 aa).

8 consecutive transmembrane segments (helical) span residues 4–24 (NLKY…VLTM), 38–58 (LSST…IFLV), 136–156 (LGMY…FVQW), 174–194 (FVGL…GVYF), 212–232 (LGFF…GELV), 243–263 (QLTW…AAVI), 269–289 (ILKG…SYFW), and 293–313 (FVPT…TFLY).

This sequence belongs to the nucleotide-sugar transporter family. SLC35A subfamily. Interacts with SLC35A2; the interaction is reduced in the presence of SLC35A4. Found in a complex with SLC35A2 and SLC35A4. Interacts with MGAT4B. In terms of processing, O-Glcnacylation regulates the stability of SLC35A3 and the specific complex formation with MGAT4B.

It localises to the golgi apparatus membrane. The catalysed reaction is UMP(out) + UDP-N-acetyl-alpha-D-glucosamine(in) = UMP(in) + UDP-N-acetyl-alpha-D-glucosamine(out). Functionally, transports diphosphate-N-acetylglucosamine (UDP-GlcNAc) from the cytosol into the lumen of the Golgi apparatus, functioning as an antiporter that exchanges UDP-N-acetyl-alpha-D-glucosamine for UMP. May supply UDP-GlcNAc as substrate for Golgi-resident glycosyltransferases that generate highly branched, multiantennary complex N-glycans and keratan sulfate. However, the exact role of SLC35A3 still needs to be elucidated, it could be a member of a catalytically more efficient multiprotein complex rather than function independently as a single transporter. This chain is UDP-N-acetylglucosamine transporter (Slc35a3), found in Rattus norvegicus (Rat).